The primary structure comprises 1052 residues: RTX-III toxin determinant A from serotype 8 (1052 aa).

3 consecutive transmembrane segments (helical) span residues 248-265 (GLDI…SFAL), 275-334 (KVAA…LRVA), and 372-418 (DASI…GILE). 6 Hemolysin-type calcium-binding repeats span residues 744–761 (KGSK…DDLL), 762–779 (NGND…NDEL), 780–797 (RGDN…NDKL), 798–815 (LGGN…NDEL), 826–843 (RGGK…SDLL), and 844–861 (DGGE…SDFY).

This sequence belongs to the RTX prokaryotic toxin (TC 1.C.11) family. Palmitoylated by ApxIIIC. The toxin only becomes active when modified.

It is found in the secreted. It localises to the host cell membrane. In terms of biological role, does not have hemolytic activity but shows a strong cytotoxicity towards alveolar macrophages and neutrophils. This Actinobacillus pleuropneumoniae (Haemophilus pleuropneumoniae) protein is RTX-III toxin determinant A from serotype 8 (apxIIIA).